Reading from the N-terminus, the 439-residue chain is Chitinase-like protein Idgf1 (439 aa).

The signal sequence occupies residues 1 to 20 (MRFQLFYILGLLSVTSLTHA). Positions 22-439 (SNLICYYDSN…ILRSIKYFMG (418 aa)) constitute a GH18 domain. Cys26 and Cys53 are oxidised to a cystine. N-linked (GlcNAc...) asparagine glycosylation is found at Asn122, Asn218, and Asn346. A disulfide bridge links Cys340 with Cys423.

This sequence belongs to the glycosyl hydrolase 18 family. IDGF subfamily. In terms of tissue distribution, primarily expressed in yolk cells and fat body. In larvae, it is expressed in large salivary gland cells and weakly expressed in imaginal disks. Less expressed than Idgf2 and Idgf4.

It is found in the secreted. In terms of biological role, cooperates with insulin-like peptides to stimulate the proliferation, polarization and motility of imaginal disk cells. May act by stabilizing the binding of insulin-like peptides to its receptor through a simultaneous interaction with both molecules to form a multiprotein signaling complex. This Drosophila melanogaster (Fruit fly) protein is Chitinase-like protein Idgf1 (Idgf1).